The sequence spans 325 residues: Peroxidase 68 (325 aa).

A signal peptide spans 1-28 (MECYEQSRQRAAFVVLLFIVMLGSQAQA). The residue at position 29 (Gln29) is a Pyrrolidone carboxylic acid. 4 disulfide bridges follow: Cys39–Cys119, Cys72–Cys77, Cys125–Cys321, and Cys205–Cys230. His70 functions as the Proton acceptor in the catalytic mechanism. Residues Asp71, Val74, Gly76, Asp78, and Ser80 each coordinate Ca(2+). N-linked (GlcNAc...) asparagine glycosylation occurs at Asn99. Residue Pro168 participates in substrate binding. Position 198 (His198) interacts with heme b. Ca(2+) is bound at residue Thr199. N-linked (GlcNAc...) asparagine glycosylation is present at Asn214. Positions 245, 248, and 253 each coordinate Ca(2+).

It belongs to the peroxidase family. Classical plant (class III) peroxidase subfamily. It depends on heme b as a cofactor. Ca(2+) is required as a cofactor.

It localises to the secreted. It catalyses the reaction 2 a phenolic donor + H2O2 = 2 a phenolic radical donor + 2 H2O. Its function is as follows. Removal of H(2)O(2), oxidation of toxic reductants, biosynthesis and degradation of lignin, suberization, auxin catabolism, response to environmental stresses such as wounding, pathogen attack and oxidative stress. These functions might be dependent on each isozyme/isoform in each plant tissue. In Arabidopsis thaliana (Mouse-ear cress), this protein is Peroxidase 68 (PER68).